The primary structure comprises 367 residues: MSDVPELIHGPLEDRHRELGASFAEFGGWLMPVSYAGTVSEHNATRTAVGLFDVSHLGKALVRGPGAAQFVNSALTNDLGRIGPGKAQYTLCCTESGGVIDDLIAYYVSDDEIFLVPNAANTAAVVGALQAAAPGGLSITNLHRSYAVLAVQGPCSTDVLTALGLPTEMDYMGYADASYSGVPVRVCRTGYTGEHGYELLPPWESAGVVFDALLAAVSAAGGEPAGLGARDTLRTEMGYPLHGHELSLDISPLQARCGWAVGWRKDAFFGRAALLAEKAAGPRRLLRGLRMVGRGVLRPGLAVLVGDETVGVTTSGTFSPTLQVGIGLALIDSDAGIEDGQQINVDVRGRAVECQVVCPPFVAVKTR.

This sequence belongs to the GcvT family. The glycine cleavage system is composed of four proteins: P, T, L and H.

It carries out the reaction N(6)-[(R)-S(8)-aminomethyldihydrolipoyl]-L-lysyl-[protein] + (6S)-5,6,7,8-tetrahydrofolate = N(6)-[(R)-dihydrolipoyl]-L-lysyl-[protein] + (6R)-5,10-methylene-5,6,7,8-tetrahydrofolate + NH4(+). Its function is as follows. The glycine cleavage system catalyzes the degradation of glycine. The chain is Aminomethyltransferase from Mycobacterium bovis (strain ATCC BAA-935 / AF2122/97).